The chain runs to 419 residues: L-rhamnose isomerase (419 aa).

Residues His-262, Asp-294, and Asp-296 each contribute to the Mn(2+) site.

It belongs to the rhamnose isomerase family. As to quaternary structure, homotetramer. Mn(2+) serves as cofactor.

It is found in the cytoplasm. It catalyses the reaction L-rhamnopyranose = L-rhamnulose. Its pathway is carbohydrate degradation; L-rhamnose degradation; glycerone phosphate from L-rhamnose: step 1/3. In terms of biological role, catalyzes the interconversion of L-rhamnose and L-rhamnulose. The chain is L-rhamnose isomerase from Escherichia coli O157:H7.